Here is a 397-residue protein sequence, read N- to C-terminus: Tryptophan synthase beta chain (397 aa).

Lysine 88 carries the N6-(pyridoxal phosphate)lysine modification.

This sequence belongs to the TrpB family. In terms of assembly, tetramer of two alpha and two beta chains. It depends on pyridoxal 5'-phosphate as a cofactor.

The catalysed reaction is (1S,2R)-1-C-(indol-3-yl)glycerol 3-phosphate + L-serine = D-glyceraldehyde 3-phosphate + L-tryptophan + H2O. The protein operates within amino-acid biosynthesis; L-tryptophan biosynthesis; L-tryptophan from chorismate: step 5/5. Its function is as follows. The beta subunit is responsible for the synthesis of L-tryptophan from indole and L-serine. The protein is Tryptophan synthase beta chain of Shewanella amazonensis (strain ATCC BAA-1098 / SB2B).